The following is a 558-amino-acid chain: Pyrethroid hydrolase Ces2a (558 aa).

The first 26 residues, 1 to 26 (MPLARLPGWLCVVACGLLLLLQHVHG), serve as a signal peptide directing secretion. A disulfide bridge links Cys95 with Cys122. Position 209 is an N6-succinyllysine (Lys209). Ser227 (acyl-ester intermediate) is an active-site residue. A glycan (N-linked (GlcNAc...) asparagine) is linked at Asn275. An intrachain disulfide couples Cys279 to Cys290. Residue Lys296 is modified to N6-succinyllysine. Glu344 functions as the Charge relay system in the catalytic mechanism. A glycan (N-linked (GlcNAc...) asparagine) is linked at Asn361. Residue His456 is the Charge relay system of the active site.

This sequence belongs to the type-B carboxylesterase/lipase family.

Its subcellular location is the microsome. It carries out the reaction (-)-trans-permethrin + H2O = (3-phenoxyphenyl)methanol + (1S,3R)-3-(2,2-dichlorovinyl)-2,2-dimethylcyclopropanecarboxylate + H(+). It catalyses the reaction all-trans-retinyl hexadecanoate + H2O = all-trans-retinol + hexadecanoate + H(+). Its function is as follows. Carboxylesterases that catalyzes the hydrolysis of pyrethroids pesticides. Hydrolyzes permethrin faster than cypermethrin. Hydrolyzes retinyl esters. This Mus musculus (Mouse) protein is Pyrethroid hydrolase Ces2a.